The chain runs to 350 residues: Neuronal-specific septin-3 (350 aa).

Residues Met-1 to Thr-10 show a composition bias toward basic and acidic residues. The interval Met-1–Met-29 is disordered. Residues Thr-58–Asp-331 enclose the Septin-type G domain. Residues Gly-68–Ser-75 form a G1 motif region. Gly-68–Ser-75 serves as a coordination point for GTP. Phosphoserine is present on Ser-91. A GTP-binding site is contributed by Thr-102. Positions Asp-125–Gly-128 are G3 motif. The tract at residues Ala-207 to Asp-210 is G4 motif. GTP contacts are provided by residues Lys-208–Glu-216, Gly-265, and Arg-280. The disordered stretch occupies residues Arg-328–Pro-350.

Belongs to the TRAFAC class TrmE-Era-EngA-EngB-Septin-like GTPase superfamily. Septin GTPase family. Septins polymerize into heterooligomeric protein complexes that form filaments, and can associate with cellular membranes, actin filaments and microtubules. GTPase activity is required for filament formation. In terms of processing, phosphorylated by PKG on serine residues. Phosphorylated by PKG on Ser-91. Expressed in the brain including the cerebrum, hippocampus and cerebellum (at protein level).

It is found in the cytoplasm. The protein resides in the cytoskeleton. It localises to the synapse. Its function is as follows. Filament-forming cytoskeletal GTPase. May play a role in cytokinesis (Potential). The polypeptide is Neuronal-specific septin-3 (Mus musculus (Mouse)).